Consider the following 176-residue polypeptide: Peptide deformylase (176 aa).

Positions 94 and 136 each coordinate Fe cation. Glu-137 is an active-site residue. Residue His-140 coordinates Fe cation.

It belongs to the polypeptide deformylase family. It depends on Fe(2+) as a cofactor.

It carries out the reaction N-terminal N-formyl-L-methionyl-[peptide] + H2O = N-terminal L-methionyl-[peptide] + formate. Removes the formyl group from the N-terminal Met of newly synthesized proteins. Requires at least a dipeptide for an efficient rate of reaction. N-terminal L-methionine is a prerequisite for activity but the enzyme has broad specificity at other positions. In Mesorhizobium japonicum (strain LMG 29417 / CECT 9101 / MAFF 303099) (Mesorhizobium loti (strain MAFF 303099)), this protein is Peptide deformylase.